Here is a 913-residue protein sequence, read N- to C-terminus: Protein translocase subunit SecA (913 aa).

ATP-binding positions include Gln87, 105–109, and Asp512; that span reads GEGKT. Zn(2+)-binding residues include Cys897, Cys899, Cys908, and His909.

This sequence belongs to the SecA family. In terms of assembly, monomer and homodimer. Part of the essential Sec protein translocation apparatus which comprises SecA, SecYEG and auxiliary proteins SecDF-YajC and YidC. It depends on Zn(2+) as a cofactor.

It localises to the cell inner membrane. The protein resides in the cytoplasm. It carries out the reaction ATP + H2O + cellular proteinSide 1 = ADP + phosphate + cellular proteinSide 2.. Functionally, part of the Sec protein translocase complex. Interacts with the SecYEG preprotein conducting channel. Has a central role in coupling the hydrolysis of ATP to the transfer of proteins into and across the cell membrane, serving both as a receptor for the preprotein-SecB complex and as an ATP-driven molecular motor driving the stepwise translocation of polypeptide chains across the membrane. This Pseudomonas fluorescens (strain ATCC BAA-477 / NRRL B-23932 / Pf-5) protein is Protein translocase subunit SecA.